A 510-amino-acid chain; its full sequence is NAD(P)H-quinone oxidoreductase subunit 2 B, chloroplastic (510 aa).

13 helical membrane passes run 24 to 44 (LLLFHGSFILPECILIFGLIL), 57 to 77 (IPWLYFISSTSLVMSITALLF), 99 to 119 (IFQFLILLCSTLCIPLSVEYI), 124 to 144 (MAITEFLLFVLTATLGGMFLC), 150 to 170 (ITIFVAPECFSLCSYLLSGYT), 183 to 203 (YLLMGGASSSILVHGFSWLYG), 229 to 249 (ISIALIFITVGIGFKLSPAPF), 295 to 315 (WHLLLEILAILSMILGNLVAI), 323 to 343 (MLAYSSIGQIGYVIIGIIVGD), 347 to 367 (GYASMITYMLFYISMNLGTFA), 395 to 415 (ALSSALCLLSLGGLPPLAGFF), 418 to 438 (LHLFWCGWQAGLYFLVSIGLL), and 484 to 504 (MIVCVIASTIPGISMNPIIAI).

This sequence belongs to the complex I subunit 2 family. NDH is composed of at least 16 different subunits, 5 of which are encoded in the nucleus.

The protein resides in the plastid. Its subcellular location is the chloroplast thylakoid membrane. The catalysed reaction is a plastoquinone + NADH + (n+1) H(+)(in) = a plastoquinol + NAD(+) + n H(+)(out). The enzyme catalyses a plastoquinone + NADPH + (n+1) H(+)(in) = a plastoquinol + NADP(+) + n H(+)(out). Functionally, NDH shuttles electrons from NAD(P)H:plastoquinone, via FMN and iron-sulfur (Fe-S) centers, to quinones in the photosynthetic chain and possibly in a chloroplast respiratory chain. The immediate electron acceptor for the enzyme in this species is believed to be plastoquinone. Couples the redox reaction to proton translocation, and thus conserves the redox energy in a proton gradient. The protein is NAD(P)H-quinone oxidoreductase subunit 2 B, chloroplastic of Ceratophyllum demersum (Rigid hornwort).